The chain runs to 391 residues: uncharacterized protein (391 aa).

The signal sequence occupies residues 1–20 (MRKLFLLSILMIGVIVAFAG). C21 carries S-archaeol cysteine lipidation. The 274-residue stretch at 104–377 (RIVTDFYCPI…DFAKMIHPEL (274 aa)) folds into the Fe/B12 periplasmic-binding domain.

The protein localises to the cell membrane. This is an uncharacterized protein from Methanocaldococcus jannaschii (strain ATCC 43067 / DSM 2661 / JAL-1 / JCM 10045 / NBRC 100440) (Methanococcus jannaschii).